A 964-amino-acid chain; its full sequence is Glycine dehydrogenase (decarboxylating) (964 aa).

A compositionally biased stretch (polar residues) spans 1–11 (MNSTLQNQTKT). Residues 1-21 (MNSTLQNQTKTNLEKVGTDPL) form a disordered region. At lysine 713 the chain carries N6-(pyridoxal phosphate)lysine.

This sequence belongs to the GcvP family. As to quaternary structure, the glycine cleavage system is composed of four proteins: P, T, L and H. Pyridoxal 5'-phosphate serves as cofactor.

It carries out the reaction N(6)-[(R)-lipoyl]-L-lysyl-[glycine-cleavage complex H protein] + glycine + H(+) = N(6)-[(R)-S(8)-aminomethyldihydrolipoyl]-L-lysyl-[glycine-cleavage complex H protein] + CO2. In terms of biological role, the glycine cleavage system catalyzes the degradation of glycine. The P protein binds the alpha-amino group of glycine through its pyridoxal phosphate cofactor; CO(2) is released and the remaining methylamine moiety is then transferred to the lipoamide cofactor of the H protein. The protein is Glycine dehydrogenase (decarboxylating) of Leptospira interrogans serogroup Icterohaemorrhagiae serovar copenhageni (strain Fiocruz L1-130).